The following is a 312-amino-acid chain: MALRPEDPSSGFRHGNVVAFIIEKMARHTKGPEFYFENISLSWEEVEDKLRAILEDSEVPSEVKEACTWGSLALGVRFAHRQGQLQNRRVQWLQGFAKLHRSAALVLASNLTELKEQQEMECNEATFQLQLTETSLAEVQRERDMLRWKLFHAELAPPQGQGQATVFPGLATAGGDWTEGAGEQEKEAVAAAGAAGGKGEERYAEAGPAPAEVLQGLGGGFRQPLGAIVAGKLHLCGAEGERSQVSTNSHVCLLWAWVHSLTGASSCPAPYLIHILIPMPFVRLLSHTQYTPFTSKGHRTGSNSDAFQLGGL.

The protein belongs to the TEX13 family. As to expression, testis specific.

This chain is Testis-expressed protein 13B (TEX13B), found in Homo sapiens (Human).